Consider the following 60-residue polypeptide: Small ribosomal subunit protein eS31 (60 aa).

The Zn(2+) site is built by cysteine 32, cysteine 35, cysteine 50, and cysteine 53. Residues 32–53 (CPRCGAGVFMGEHKDRFSCGKC) form a C4-type zinc finger.

The protein belongs to the eukaryotic ribosomal protein eS31 family. Part of the 30S ribosomal subunit. Zn(2+) serves as cofactor.

The sequence is that of Small ribosomal subunit protein eS31 from Methanocorpusculum labreanum (strain ATCC 43576 / DSM 4855 / Z).